The sequence spans 436 residues: MITSRTARRTFRRNSYPEHLRITAILRKETVGGALLLAATIAALIWANSPGSESYFALRDAKIGFNPFGLKLDLSLGAWASDGLLAIFFFIAGLELKREFIAGDLRRFDRAIVPIAAAIGGVAVPAIIYTLINLSSGAEILNGWAIPTATDIAFALAVLAVISTHLPTALRTFLLTLAVVDDLIAISIIAVFYPHNLQPQYLALALIPLGLFTWAVQKRIRSWYLLLPLAIITWVLVHESGVHATVAGVLLAFAVPVVRRDRNPDNGPGLAEHFEHRFRPLSAGVAVPIFAFFSAGVAIGGWAGFTNSLTDTVAIGIIAALILGKAIGIFGATFLITKTTRASLDDGLSWIDVLGLAILAGIGFTVSLLISELAFGADSPHNDHAKVAILTASLVAALLATVILRIRNQHYRKLEKLESVDADGDGVPDVFDEKDD.

A run of 11 helical transmembrane segments spans residues 31 to 51 (VGGALLLAATIAALIWANSPG), 74 to 94 (LSLGAWASDGLLAIFFFIAGL), 112 to 132 (IVPIAAAIGGVAVPAIIYTLI), 143 to 163 (GWAIPTATDIAFALAVLAVIS), 173 to 193 (FLLTLAVVDDLIAISIIAVFY), 196 to 216 (NLQPQYLALALIPLGLFTWAV), 222 to 242 (SWYLLLPLAIITWVLVHESGV), 285 to 305 (VAVPIFAFFSAGVAIGGWAGF), 315 to 335 (IGIIAALILGKAIGIFGATFL), 350 to 370 (WIDVLGLAILAGIGFTVSLLI), and 384 to 404 (HAKVAILTASLVAALLATVIL).

It belongs to the NhaA Na(+)/H(+) (TC 2.A.33) antiporter family.

It localises to the cell membrane. It catalyses the reaction Na(+)(in) + 2 H(+)(out) = Na(+)(out) + 2 H(+)(in). Functionally, na(+)/H(+) antiporter that extrudes sodium in exchange for external protons. This Renibacterium salmoninarum (strain ATCC 33209 / DSM 20767 / JCM 11484 / NBRC 15589 / NCIMB 2235) protein is Na(+)/H(+) antiporter NhaA.